We begin with the raw amino-acid sequence, 263 residues long: Endonuclease 8 (263 aa).

The active-site Schiff-base intermediate with DNA is P2. The active-site Proton donor is the E3. K53 serves as the catalytic Proton donor; for beta-elimination activity. Q70, R125, and N169 together coordinate DNA. Residues 229–263 (KVFHRDGERCERCGGVIEKTTLSSRPFYWCPGCQH) form an FPG-type zinc finger. R253 functions as the Proton donor; for delta-elimination activity in the catalytic mechanism.

It belongs to the FPG family. Requires Zn(2+) as cofactor.

It carries out the reaction 2'-deoxyribonucleotide-(2'-deoxyribose 5'-phosphate)-2'-deoxyribonucleotide-DNA = a 3'-end 2'-deoxyribonucleotide-(2,3-dehydro-2,3-deoxyribose 5'-phosphate)-DNA + a 5'-end 5'-phospho-2'-deoxyribonucleoside-DNA + H(+). Its function is as follows. Involved in base excision repair of DNA damaged by oxidation or by mutagenic agents. Acts as a DNA glycosylase that recognizes and removes damaged bases. Has a preference for oxidized pyrimidines, such as thymine glycol, 5,6-dihydrouracil and 5,6-dihydrothymine. Has AP (apurinic/apyrimidinic) lyase activity and introduces nicks in the DNA strand. Cleaves the DNA backbone by beta-delta elimination to generate a single-strand break at the site of the removed base with both 3'- and 5'-phosphates. The chain is Endonuclease 8 from Klebsiella pneumoniae (strain 342).